Reading from the N-terminus, the 582-residue chain is La-related protein 7 (582 aa).

M1 bears the N-acetylmethionine mark. The interval 1 to 27 (METESGNQEKVMEEESTEKKKEVEKKK) is disordered. Positions 10–25 (KVMEEESTEKKKEVEK) are enriched in basic and acidic residues. One can recognise an HTH La-type RNA-binding domain in the interval 28 to 122 (RSRVKQVLAD…KPLGERPKDE (95 aa)). Positions 125-203 (RTVYVELLPK…PRKPGIFPKT (79 aa)) constitute an RRM domain. 2 disordered regions span residues 188 to 368 (NPPE…ERHK) and 410 to 442 (KSES…RTQE). The span at 219 to 228 (KKKKKKKGRM) shows a compositional bias: basic residues. A compositionally biased stretch (basic and acidic residues) spans 229-240 (KKEDNIQAKEEN). K237 participates in a covalent cross-link: Glycyl lysine isopeptide (Lys-Gly) (interchain with G-Cter in SUMO2). T257 is modified (phosphothreonine). 6 positions are modified to phosphoserine: S258, S261, S273, S298, S299, and S300. Residues 316-335 (IQKDIIKEASEASKENRDIE) are compositionally biased toward basic and acidic residues. A Phosphoserine modification is found at S337. The residue at position 338 (T338) is a Phosphothreonine. At S351 the chain carries Phosphoserine. The span at 354–367 (KTKRKHKKKHKERH) shows a compositional bias: basic residues. Residue K410 forms a Glycyl lysine isopeptide (Lys-Gly) (interchain with G-Cter in SUMO2) linkage. Over residues 428–442 (KNEKTANREECRTQE) the composition is skewed to basic and acidic residues. A xRRM domain is found at 450 to 563 (QFVSGVIVKI…TEKLITKAEK (114 aa)).

Belongs to the LARP7 family. Core component of the 7SK RNP complex, at least composed of 7SK RNA, LARP7, MEPCE, HEXIM1 (or HEXIM2) and P-TEFb (composed of CDK9 and CCNT1/cyclin-T1). Interacts with METTL16. Interacts with RBM7; upon genotoxic stress this interaction is enhanced, triggering the release of inactive P-TEFb complex from the core, yielding to P-TEFb complex activation. Associates with box C/D small nucleolar ribonucleoprotein (snoRNP) complexes.

The protein localises to the nucleus. The protein resides in the nucleoplasm. Functionally, RNA-binding protein that specifically binds distinct small nuclear RNA (snRNAs) and regulates their processing and function. Specifically binds the 7SK snRNA (7SK RNA) and acts as a core component of the 7SK ribonucleoprotein (RNP) complex, thereby acting as a negative regulator of transcription elongation by RNA polymerase II. The 7SK RNP complex sequesters the positive transcription elongation factor b (P-TEFb) in a large inactive 7SK RNP complex preventing RNA polymerase II phosphorylation and subsequent transcriptional elongation. The 7SK RNP complex also promotes snRNA gene transcription by RNA polymerase II via interaction with the little elongation complex (LEC). LARP7 specifically binds to the highly conserved 3'-terminal U-rich stretch of 7SK RNA; on stimulation, remains associated with 7SK RNA, whereas P-TEFb is released from the complex. LARP7 also acts as a regulator of mRNA splicing fidelity by promoting U6 snRNA processing. Specifically binds U6 snRNAs and associates with a subset of box C/D RNP complexes: promotes U6 snRNA 2'-O-methylation by facilitating U6 snRNA loading into box C/D RNP complexes. U6 snRNA 2'-O-methylation is required for mRNA splicing fidelity. Binds U6 snRNAs with a 5'-CAGGG-3' sequence motif. U6 snRNA processing is required for spermatogenesis. The protein is La-related protein 7 of Homo sapiens (Human).